Here is a 271-residue protein sequence, read N- to C-terminus: 3-methyl-2-oxobutanoate hydroxymethyltransferase (271 aa).

Residues Asp53 and Asp92 each coordinate Mg(2+). Residues 53–54, Asp92, and Lys120 contribute to the 3-methyl-2-oxobutanoate site; that span reads DS. Glu122 serves as a coordination point for Mg(2+). The active-site Proton acceptor is Glu189.

The protein belongs to the PanB family. As to quaternary structure, homodecamer; pentamer of dimers. The cofactor is Mg(2+).

Its subcellular location is the cytoplasm. The enzyme catalyses 3-methyl-2-oxobutanoate + (6R)-5,10-methylene-5,6,7,8-tetrahydrofolate + H2O = 2-dehydropantoate + (6S)-5,6,7,8-tetrahydrofolate. Its pathway is cofactor biosynthesis; (R)-pantothenate biosynthesis; (R)-pantoate from 3-methyl-2-oxobutanoate: step 1/2. Catalyzes the reversible reaction in which hydroxymethyl group from 5,10-methylenetetrahydrofolate is transferred onto alpha-ketoisovalerate to form ketopantoate. In Paraburkholderia xenovorans (strain LB400), this protein is 3-methyl-2-oxobutanoate hydroxymethyltransferase.